The chain runs to 348 residues: Dihydroorotase (348 aa).

Zn(2+) is bound by residues His14 and His16. Residues 16–18 (HLR) and Asn42 each bind substrate. Lys100, His137, and His175 together coordinate Zn(2+). An N6-carboxylysine modification is found at Lys100. His137 is a substrate binding site. Leu220 contributes to the substrate binding site. Residue Asp248 coordinates Zn(2+). Residue Asp248 is part of the active site. 2 residues coordinate substrate: His252 and Ala264.

Belongs to the metallo-dependent hydrolases superfamily. DHOase family. Class II DHOase subfamily. As to quaternary structure, homodimer. Zn(2+) serves as cofactor.

The catalysed reaction is (S)-dihydroorotate + H2O = N-carbamoyl-L-aspartate + H(+). It functions in the pathway pyrimidine metabolism; UMP biosynthesis via de novo pathway; (S)-dihydroorotate from bicarbonate: step 3/3. In terms of biological role, catalyzes the reversible cyclization of carbamoyl aspartate to dihydroorotate. The polypeptide is Dihydroorotase (Pseudomonas fluorescens (strain ATCC BAA-477 / NRRL B-23932 / Pf-5)).